Here is a 266-residue protein sequence, read N- to C-terminus: Dolichol-phosphate mannosyltransferase subunit 1 (266 aa).

The span at 1-19 (MASPGASRGASAATAAAAS) shows a compositional bias: low complexity. Positions 1–31 (MASPGASRGASAATAAAASPRPPQGRSSRRD) are disordered. At A2 the chain carries N-acetylalanine. S3 carries the post-translational modification Phosphoserine. GDP-alpha-D-mannose-binding residues include P38, Y40, E42, I69, D71, D124, A125, D126, R153, R240, and K246. D126 is a Mg(2+) binding site. D126 serves as a coordination point for Mn(2+).

This sequence belongs to the glycosyltransferase 2 family. Component of the dolichol-phosphate mannose (DPM) synthase complex composed of DPM1, DPM2 and DPM3; within the complex, directly interacts with DPM3. This interaction may stabilize DPM1. Mg(2+) serves as cofactor. Mn(2+) is required as a cofactor. The cofactor is Ca(2+).

It localises to the endoplasmic reticulum. The catalysed reaction is a di-trans,poly-cis-dolichyl phosphate + GDP-alpha-D-mannose = a di-trans,poly-cis-dolichyl beta-D-mannosyl phosphate + GDP. Its pathway is protein modification; protein glycosylation. In terms of biological role, transfers mannose from GDP-mannose to dolichol monophosphate to form dolichol phosphate mannose (Dol-P-Man) which is the mannosyl donor in pathways leading to N-glycosylation, glycosyl phosphatidylinositol membrane anchoring, and O-mannosylation of proteins; catalytic subunit of the dolichol-phosphate mannose (DPM) synthase complex. This chain is Dolichol-phosphate mannosyltransferase subunit 1 (DPM1), found in Cricetulus griseus (Chinese hamster).